Consider the following 586-residue polypeptide: Lipoprotein LpqB (586 aa).

An N-terminal signal peptide occupies residues 1–17; it reads MVRSVFALVFAAVLLGG. Cysteine 18 carries N-palmitoyl cysteine lipidation. Residue cysteine 18 is the site of S-diacylglycerol cysteine attachment. Positions 26–45 are disordered; it reads APQAIGTVERPAPSNLPKPI.

This sequence belongs to the LpqB lipoprotein family.

It localises to the cell membrane. The chain is Lipoprotein LpqB from Mycobacterium ulcerans (strain Agy99).